We begin with the raw amino-acid sequence, 405 residues long: Probable tRNA sulfurtransferase (405 aa).

The THUMP domain occupies 60–165 (VPVAESLKQI…EEAAYLSYEN (106 aa)). ATP contacts are provided by residues 183 to 184 (ML), 208 to 209 (HF), R265, G287, and Q296.

Belongs to the ThiI family.

The protein localises to the cytoplasm. It carries out the reaction [ThiI sulfur-carrier protein]-S-sulfanyl-L-cysteine + a uridine in tRNA + 2 reduced [2Fe-2S]-[ferredoxin] + ATP + H(+) = [ThiI sulfur-carrier protein]-L-cysteine + a 4-thiouridine in tRNA + 2 oxidized [2Fe-2S]-[ferredoxin] + AMP + diphosphate. The catalysed reaction is [ThiS sulfur-carrier protein]-C-terminal Gly-Gly-AMP + S-sulfanyl-L-cysteinyl-[cysteine desulfurase] + AH2 = [ThiS sulfur-carrier protein]-C-terminal-Gly-aminoethanethioate + L-cysteinyl-[cysteine desulfurase] + A + AMP + 2 H(+). It functions in the pathway cofactor biosynthesis; thiamine diphosphate biosynthesis. Functionally, catalyzes the ATP-dependent transfer of a sulfur to tRNA to produce 4-thiouridine in position 8 of tRNAs, which functions as a near-UV photosensor. Also catalyzes the transfer of sulfur to the sulfur carrier protein ThiS, forming ThiS-thiocarboxylate. This is a step in the synthesis of thiazole, in the thiamine biosynthesis pathway. The sulfur is donated as persulfide by IscS. The chain is Probable tRNA sulfurtransferase from Streptococcus mutans serotype c (strain ATCC 700610 / UA159).